Here is a 470-residue protein sequence, read N- to C-terminus: Protein naked cuticle homolog 1 (470 aa).

Disordered regions lie at residues 1–21 and 90–114; these read MGKL…PEGD and PPEK…PCPG. The N-myristoyl glycine moiety is linked to residue Gly2. Residues 92–109 show a composition bias toward basic and acidic residues; that stretch reads EKTDGLGSGDEKKMERVS. Residues 125–190 form an interaction with DVL1, DVL2 and DVL3 region; the sequence is QCDVSMEEDS…LRVKLTVAPD (66 aa). An EF-hand domain is found at 131–166; sequence EEDSRQEWTFTLYDFDNNGKVTREDITSLLHTIYEV. Ca(2+) is bound by residues Asp144, Asp146, Asn148, Lys150, and Asp155. The segment covering 192–205 has biased composition (polar residues); it reads SQSKRSVLVNQADL. Disordered stretches follow at residues 192–228, 271–314, 337–357, and 446–470; these read SQSK…KKQR, QFGP…QGVD, GTQD…KSVG, and GQPV…FYQT. The segment covering 210-227 has biased composition (basic and acidic residues); it reads PRAETKPTEDLRSWEKKQ. Residues 271–281 are compositionally biased toward polar residues; the sequence is QFGPGSPSVAQ. Residues 452–470 are compositionally biased toward basic residues; sequence HEHHHHHEHHHHYHHFYQT.

The protein belongs to the NKD family. As to quaternary structure, interacts with DVL1, DVL2, DVL3 and PPP2R3A. In terms of tissue distribution, expressed in colon, heart, kidney, leukocyte, liver, lung, ovary, pancreas, placenta, prostate, skeletal muscle, small intestine and spleen.

It is found in the cell membrane. The protein localises to the cytoplasm. In terms of biological role, cell autonomous antagonist of the canonical Wnt signaling pathway. May activate a second Wnt signaling pathway that controls planar cell polarity. This Homo sapiens (Human) protein is Protein naked cuticle homolog 1 (NKD1).